The sequence spans 244 residues: tRNA pseudouridine synthase A (244 aa).

Aspartate 52 serves as the catalytic Nucleophile. Tyrosine 110 contributes to the substrate binding site.

The protein belongs to the tRNA pseudouridine synthase TruA family. In terms of assembly, homodimer.

It catalyses the reaction uridine(38/39/40) in tRNA = pseudouridine(38/39/40) in tRNA. In terms of biological role, formation of pseudouridine at positions 38, 39 and 40 in the anticodon stem and loop of transfer RNAs. The protein is tRNA pseudouridine synthase A of Geotalea daltonii (strain DSM 22248 / JCM 15807 / FRC-32) (Geobacter daltonii).